Reading from the N-terminus, the 1272-residue chain is uncharacterized protein (1272 aa).

Coiled-coil stretches lie at residues 185-212, 246-274, and 607-640; these read IEFLDEIEKAELKKRRKEGNLTIEEAVN, KNSAEEKEKKLRLSKKKEQLEKIQEYLDA, and ALGKDLEKLIKLVNDHDQEIQKIYKEVEKLNTVI. The tract at residues 1179-1231 is disordered; sequence ELPETSQQPVVPTPPATRPSSPIPPESDILTEEEQLEEQPPRQQQATRKTTTT. The segment covering 1189 to 1203 has biased composition (pro residues); sequence VPTPPATRPSSPIPP. Positions 1219–1231 are enriched in low complexity; that stretch reads PRQQQATRKTTTT.

This is an uncharacterized protein from Magallana gigas (Pacific oyster).